Reading from the N-terminus, the 131-residue chain is Profilin-2 (131 aa).

The cysteines at positions 13 and 115 are disulfide-linked. The short motif at 81 to 97 (AVIRGKKGPGGVTVKKT) is the Involved in PIP2 interaction element. Position 111 is a phosphothreonine (Thr-111).

Belongs to the profilin family. As to quaternary structure, multimer. Occurs in many kinds of cells as a complex with monomeric actin in a 1:1 ratio. In terms of processing, phosphorylated by MAP kinases.

It localises to the cytoplasm. Its subcellular location is the cytoskeleton. Its function is as follows. Binds to actin and affects the structure of the cytoskeleton. At high concentrations, profilin prevents the polymerization of actin, whereas it enhances it at low concentrations. By binding to PIP2, it inhibits the formation of IP3 and DG. The polypeptide is Profilin-2 (Hevea brasiliensis (Para rubber tree)).